The primary structure comprises 1548 residues: Dual oxidase 2 (1548 aa).

The N-terminal stretch at 1 to 25 is a signal peptide; sequence MLRARPEALMLLGALLTGSLGPSGN. Over 26-601 the chain is Extracellular; that stretch reads QDALSLPWEV…EGSSPGFAIT (576 aa). The peroxidase-like; mediates peroxidase activity stretch occupies residues 30-596; the sequence is SLPWEVQRYD…VLDFFEGSSP (567 aa). N-linked (GlcNAc...) asparagine glycans are attached at residues N100, N348, N382, N455, and N537. C124 and C1162 are disulfide-bonded. The helical transmembrane segment at 602 to 622 threads the bilayer; sequence IIALCCLPLVSLLLSGVVAYF. Topologically, residues 623–1041 are cytoplasmic; that stretch reads RGREHKKLQK…KRFVENYRRH (419 aa). EF-hand domains follow at residues 819-854, 855-890, and 899-934; these read PQDM…FMKG, SPED…FIEI, and QLAE…HDSE. 9 residues coordinate Ca(2+): D832, D834, N836, Y838, E843, D868, D870, N872, and E879. An interaction with TXNDC11 region spans residues 960 to 1245; the sequence is ISCRVSFITR…GSYALIQLPT (286 aa). The disordered stretch occupies residues 971–991; that stretch reads PGERSHPQGLGPPAPEAPELG. A helical transmembrane segment spans residues 1042–1062; sequence IVCVAIFSAICVGVFADRAYY. Over 1063–1076 the chain is Extracellular; the sequence is YGFASPPSDIAQTT. A helical membrane pass occupies residues 1077 to 1097; that stretch reads LVGIILSRGTAASVSFMFSYI. Residues 1084-1266 form the Ferric oxidoreductase domain; sequence RGTAASVSFM…YGGDKLVSLS (183 aa). Over 1098–1128 the chain is Cytoplasmic; that stretch reads LLTMCRNLITFLRETFLNRYVPFDAAVDFHR. A helical transmembrane segment spans residues 1129-1151; it reads WIAMAAVVLAILHSAGHAVNVYI. Over 1152 to 1185 the chain is Extracellular; it reads FSVSPLSLLACIFPNVFVNDGSKLPQKFYWWFFQ. Residues 1186 to 1206 form a helical membrane-spanning segment; that stretch reads TVPGMTGVLLLLVLAIMYVFA. Residues 1207–1223 lie on the Cytoplasmic side of the membrane; it reads SHHFRRRSFRGFWLTHH. The next 2 membrane-spanning stretches (helical) occupy residues 1224-1244 and 1245-1265; these read LYIL…IQLP and TFHI…LVSL. At 1266–1548 the chain is on the cytoplasmic side; it reads SRKKVEISVV…AHFMHHYENF (283 aa). One can recognise an FAD-binding FR-type domain in the interval 1267-1373; that stretch reads RKKVEISVVK…DGPFGEGHQE (107 aa).

It in the N-terminal section; belongs to the peroxidase family. In terms of assembly, heterodimer with DUOXA2; disulfide-linked. Interacts with TXNDC11, TPO and CYBA. N-glycosylated. Expressed in colon, small intestine, duodenum and tracheal surface epithelial cells (at protein level). Expressed in thyrocytes. Also detected in kidney, liver, lung, pancreas, prostate, salivary glands, rectum and testis.

The protein resides in the apical cell membrane. Its subcellular location is the cell junction. The catalysed reaction is NADH + O2 + H(+) = H2O2 + NAD(+). The enzyme catalyses NADPH + O2 + H(+) = H2O2 + NADP(+). It participates in hormone biosynthesis; thyroid hormone biosynthesis. With respect to regulation, peroxidase activity is inhibited by aminobenzohydrazide. The NADPH oxidase activity is calcium-dependent. Its function is as follows. Generates hydrogen peroxide which is required for the activity of thyroid peroxidase/TPO and lactoperoxidase/LPO. Plays a role in thyroid hormones synthesis and lactoperoxidase-mediated antimicrobial defense at the surface of mucosa. May have its own peroxidase activity through its N-terminal peroxidase-like domain. The sequence is that of Dual oxidase 2 (DUOX2) from Homo sapiens (Human).